The chain runs to 424 residues: Enolase (424 aa).

A (2R)-2-phosphoglycerate-binding site is contributed by Gln162. The active-site Proton donor is the Glu204. Positions 241, 284, and 311 each coordinate Mg(2+). Positions 336, 365, 366, and 387 each coordinate (2R)-2-phosphoglycerate. Lys336 serves as the catalytic Proton acceptor.

The protein belongs to the enolase family. Requires Mg(2+) as cofactor.

It is found in the cytoplasm. It localises to the secreted. The protein resides in the cell surface. The enzyme catalyses (2R)-2-phosphoglycerate = phosphoenolpyruvate + H2O. Its pathway is carbohydrate degradation; glycolysis; pyruvate from D-glyceraldehyde 3-phosphate: step 4/5. In terms of biological role, catalyzes the reversible conversion of 2-phosphoglycerate (2-PG) into phosphoenolpyruvate (PEP). It is essential for the degradation of carbohydrates via glycolysis. This chain is Enolase, found in Sinorhizobium fredii (strain NBRC 101917 / NGR234).